The following is a 208-amino-acid chain: Coiled-coil domain-containing protein 25 (208 aa).

Topologically, residues 1-105 (MVFYFTSSSV…SNLKKTADMD (105 aa)) are extracellular. Residues 21 to 25 (KDKYE) form a DNA-binding region. Position 23 is an N6-acetyllysine (Lys-23). A helical transmembrane segment spans residues 106–122 (VGQIGFHRQKDVKIVTV). A coiled-coil region spans residues 117-187 (VKIVTVEKKV…REMDELRSYS (71 aa)). Residues 123-208 (EKKVNEILNR…QDGNDSDEFM (86 aa)) are Cytoplasmic-facing. Residues 145–184 (EAEKECRDHEERNEKKAQIQEMKRREKEEMKKKREMDELR) are compositionally biased toward basic and acidic residues. Residues 145–208 (EAEKECRDHE…QDGNDSDEFM (64 aa)) are disordered. The residue at position 204 (Ser-204) is a Phosphoserine.

Belongs to the CCDC25 family. Interacts (via cytoplasmic region) with ILK.

It localises to the cell membrane. The protein localises to the endomembrane system. In terms of biological role, transmembrane receptor that senses neutrophil extracellular traps (NETs) and triggers the ILK-PARVB pathway to enhance cell motility. NETs are mainly composed of DNA fibers and are released by neutrophils to bind pathogens during inflammation. Formation of NETs is also associated with cancer metastasis, NET-DNA acting as a chemotactic factor to attract cancer cells. Specifically binds NETs on its extracellular region, in particular the 8-OHdG-enriched DNA present in NETs, and recruits ILK, initiating the ILK-PARVB cascade to induce cytoskeleton rearrangement and directional migration of cells. The chain is Coiled-coil domain-containing protein 25 from Bos taurus (Bovine).